The sequence spans 504 residues: Maturase K (504 aa).

This sequence belongs to the intron maturase 2 family. MatK subfamily.

The protein localises to the plastid. It is found in the chloroplast. Its function is as follows. Usually encoded in the trnK tRNA gene intron. Probably assists in splicing its own and other chloroplast group II introns. The polypeptide is Maturase K (Taxus baccata (English yew)).